The following is a 925-amino-acid chain: Aspulvinone E synthetase melA (925 aa).

The tract at residues 11–434 (ETAAARNGDG…GGRAKETIII (424 aa)) is adenylation (A) domain. Positions 564-644 (SPKNDFEKGL…ELAAALDNLY (81 aa)) constitute a Carrier domain. Ser601 is modified (O-(pantetheine 4'-phosphoryl)serine). The tract at residues 663 to 923 (PLWLVHPGAG…KILRSALAER (261 aa)) is thioesterase (TE) domain.

This sequence belongs to the ATP-dependent AMP-binding enzyme family.

It localises to the cytoplasm. Nonribosomal peptide synthase; part of the gene cluster that mediates the biosynthesis of Asp-melanin, a pigment that confers resistance against UV light and hampers phagocytosis by soil amoeba. The nonribosomal peptide synthase melA converts 4-hydroxyphenylpyruvate (4-HPPA) to aspulvinone E. The tyrosinase tyrP then performs hydroxylations of both aromatic moieties of aspulvinone E. The product of tyrP is highly unstable, and, due to the high reactivity of methides and ortho-diquinones, the polymeric Asp-melanin forms spontaneously. The chain is Aspulvinone E synthetase melA from Aspergillus terreus.